A 235-amino-acid chain; its full sequence is tRNA (guanine-N(1)-)-methyltransferase (235 aa).

Residues glycine 112 and 132–137 (IGDYVI) contribute to the S-adenosyl-L-methionine site.

Belongs to the RNA methyltransferase TrmD family. As to quaternary structure, homodimer.

It is found in the cytoplasm. The catalysed reaction is guanosine(37) in tRNA + S-adenosyl-L-methionine = N(1)-methylguanosine(37) in tRNA + S-adenosyl-L-homocysteine + H(+). Functionally, specifically methylates guanosine-37 in various tRNAs. The chain is tRNA (guanine-N(1)-)-methyltransferase from Anaplasma marginale (strain Florida).